Reading from the N-terminus, the 199-residue chain is MTVVVDYEMGNLLSVTKALEELGYKPSVTSDPRKILEEDLVVLPGVGAFRDAVRNLKEKGLFLALKERASLNRPILGICLGMQLFFTKSYEDGEYEGLDLIPGEVVRFQKAPKIPHMGWNNLVPVDTTHELFKNLPDYYVYFVHSYYAQTDSRYVLAYTEYGEKFPAAVRRGSIIGFQFHPEKSGPVGRQILKNLREML.

The Glutamine amidotransferase type-1 domain occupies 1 to 199; that stretch reads MTVVVDYEMG…QILKNLREML (199 aa). The active-site Nucleophile is cysteine 79. Residues histidine 180 and glutamate 182 contribute to the active site.

As to quaternary structure, heterodimer of HisH and HisF.

It localises to the cytoplasm. It catalyses the reaction 5-[(5-phospho-1-deoxy-D-ribulos-1-ylimino)methylamino]-1-(5-phospho-beta-D-ribosyl)imidazole-4-carboxamide + L-glutamine = D-erythro-1-(imidazol-4-yl)glycerol 3-phosphate + 5-amino-1-(5-phospho-beta-D-ribosyl)imidazole-4-carboxamide + L-glutamate + H(+). It carries out the reaction L-glutamine + H2O = L-glutamate + NH4(+). It functions in the pathway amino-acid biosynthesis; L-histidine biosynthesis; L-histidine from 5-phospho-alpha-D-ribose 1-diphosphate: step 5/9. Its function is as follows. IGPS catalyzes the conversion of PRFAR and glutamine to IGP, AICAR and glutamate. The HisH subunit catalyzes the hydrolysis of glutamine to glutamate and ammonia as part of the synthesis of IGP and AICAR. The resulting ammonia molecule is channeled to the active site of HisF. This chain is Imidazole glycerol phosphate synthase subunit HisH, found in Carboxydothermus hydrogenoformans (strain ATCC BAA-161 / DSM 6008 / Z-2901).